The primary structure comprises 702 residues: MVPSTFLRSKPARCLPVLLATLIFAGCGTHTQDQSAAFMQGTSQANSSFYLQQMQQSTNDSKTNWQLLAIRALLQEGKKQQAIDLFNQLPANLNSTQAREQSLLAVEVKLAQNDYQAARNLLAKIDPTNLEQPQQARYWQAQIDASQGKPSLTLLRALIAQQPLLSDAKQRQKNIDATWQALTSMPQDQANALVINADENILQGWLDLQRMWFDNRNDPTLLKAGVKDWQTRYPQNPGAKMLPTALVNMQNYKPASINKIALFLPLNGQASIFGRTIQQGFEAAKNGAPSVTGSAVPAQVAQAANVSGNDDVVSPSQAEISDLTATGSRADPVQAPTQDQAAPAAEPAAQAPATSTTPQTTASPATQPVTAPAAQPQPVVATAANPSAELKIYDTTTQPISQLLAQAQQDGATLVVGPLLKENVEEVIKSNTPLNVLALNQPEKVESRANLCYFALSPEDEARDAARHIHQQGKQTPLLLVPRGALGDRVVSAFADEWLKLGGASVLQQRFGSTAELRAGVNGGGGIALSGTPVSTLPSAQNSILGSADEMPVSSGGSVDAAYILATPEQIAYIKPMIAMRNGSQSNVTLYASSRSAQGTAGPDFRLEMEGLQYSEIPMLAGSNPSLMQQALSAVRNDYSLARLYAMGADAWSLANHFTQMRQTPGFELNGNTGDLTANQDCVINRKLSWLKYQQGKIVPAS.

The N-terminal stretch at 1–26 (MVPSTFLRSKPARCLPVLLATLIFAG) is a signal peptide. Residue C27 is the site of N-palmitoyl cysteine attachment. The S-diacylglycerol cysteine moiety is linked to residue C27. Residues 327 to 378 (GSRADPVQAPTQDQAAPAAEPAAQAPATSTTPQTTASPATQPVTAPAAQPQP) form a disordered region. Over residues 330 to 378 (ADPVQAPTQDQAAPAAEPAAQAPATSTTPQTTASPATQPVTAPAAQPQP) the composition is skewed to low complexity.

The protein belongs to the LpoA family. Interacts with PBP1a.

It is found in the cell outer membrane. In terms of biological role, regulator of peptidoglycan synthesis that is essential for the function of penicillin-binding protein 1A (PBP1a). This Klebsiella pneumoniae subsp. pneumoniae (strain ATCC 700721 / MGH 78578) protein is Penicillin-binding protein activator LpoA.